We begin with the raw amino-acid sequence, 453 residues long: 3-phosphoshikimate 1-carboxyvinyltransferase (453 aa).

The segment at 1-25 (MSHDSEPQPVTAHPAGPLTGALKPP) is disordered. 3-phosphoshikimate-binding residues include K28, S29, and R33. Phosphoenolpyruvate is bound at residue K28. Residues G101 and R129 each contribute to the phosphoenolpyruvate site. The 3-phosphoshikimate site is built by S175, Q177, D330, and K357. Q177 provides a ligand contact to phosphoenolpyruvate. The active-site Proton acceptor is the D330. 2 residues coordinate phosphoenolpyruvate: R361 and R405.

It belongs to the EPSP synthase family. Monomer.

It is found in the cytoplasm. It catalyses the reaction 3-phosphoshikimate + phosphoenolpyruvate = 5-O-(1-carboxyvinyl)-3-phosphoshikimate + phosphate. The protein operates within metabolic intermediate biosynthesis; chorismate biosynthesis; chorismate from D-erythrose 4-phosphate and phosphoenolpyruvate: step 6/7. Catalyzes the transfer of the enolpyruvyl moiety of phosphoenolpyruvate (PEP) to the 5-hydroxyl of shikimate-3-phosphate (S3P) to produce enolpyruvyl shikimate-3-phosphate and inorganic phosphate. The protein is 3-phosphoshikimate 1-carboxyvinyltransferase of Methylorubrum populi (strain ATCC BAA-705 / NCIMB 13946 / BJ001) (Methylobacterium populi).